A 63-amino-acid polypeptide reads, in one-letter code: Beta-glucosidase A-3 (63 aa).

Asp-12 is an active-site residue. N-linked (GlcNAc...) asparagine glycans are attached at residues Asn-48 and Asn-56.

This sequence belongs to the glycosyl hydrolase 3 family.

The catalysed reaction is Hydrolysis of terminal, non-reducing beta-D-glucosyl residues with release of beta-D-glucose.. It participates in glycan metabolism; cellulose degradation. This Aspergillus wentii protein is Beta-glucosidase A-3.